The sequence spans 533 residues: Na(+)/H(+) antiporter NhaB (533 aa).

The next 11 membrane-spanning stretches (helical) occupy residues 10–30 (IGNF…SFLI), 67–87 (PGGL…SQVL), 98–118 (LLLV…LFVF), 131–165 (VSLL…FYSI), 209–229 (LLMH…VGEP), 247–267 (IRMS…CFIV), 310–330 (AFVG…VGLI), 355–375 (EEAL…AVII), 396–416 (LVIF…VFVG), 454–474 (ATPN…APLI), and 481–501 (MVWM…MAIQ).

This sequence belongs to the NhaB Na(+)/H(+) (TC 2.A.34) antiporter family.

It localises to the cell inner membrane. The catalysed reaction is 2 Na(+)(in) + 3 H(+)(out) = 2 Na(+)(out) + 3 H(+)(in). Functionally, na(+)/H(+) antiporter that extrudes sodium in exchange for external protons. The protein is Na(+)/H(+) antiporter NhaB of Shewanella sp. (strain ANA-3).